We begin with the raw amino-acid sequence, 63 residues long: Keratin-associated protein 19-8 (63 aa).

It belongs to the KRTAP type 19 family. Interacts with hair keratins.

In the hair cortex, hair keratin intermediate filaments are embedded in an interfilamentous matrix, consisting of hair keratin-associated proteins (KRTAP), which are essential for the formation of a rigid and resistant hair shaft through their extensive disulfide bond cross-linking with abundant cysteine residues of hair keratins. The matrix proteins include the high-sulfur and high-glycine-tyrosine keratins. In Homo sapiens (Human), this protein is Keratin-associated protein 19-8 (KRTAP19-8).